A 290-amino-acid chain; its full sequence is UBX domain-containing protein 1-B (290 aa).

Residues 1 to 42 form the UBA domain; sequence MADCSALESLIEMGFSPSRAEKALSATGNQGIEPAMDWLVEH. Residues 49-210 form a disordered region; it reads KEPSVVIPED…VQEPPTKKEY (162 aa). Composition is skewed to basic and acidic residues over residues 80-117 and 132-172; these read PLTEEEKEKQTKRMMELIAQKQKEREEREKRERIEQEK and RMQE…DRAR. A coiled-coil region spans residues 81-171; the sequence is LTEEEKEKQT…KIARDKADRA (91 aa). The segment covering 185–201 has biased composition (low complexity); that stretch reads PAETSVPATAPSPSSPV. Positions 208-287 constitute a UBX domain; sequence KEYDQCRIQV…GLVPTAVLIV (80 aa).

It is found in the cytoplasm. Component of a complex required to couple deglycosylation and proteasome-mediated degradation of misfolded proteins in the endoplasmic reticulum that are retrotranslocated in the cytosol. Involved in ubiquitin-proteasome systems. The chain is UBX domain-containing protein 1-B (ubxn1-b) from Xenopus laevis (African clawed frog).